The sequence spans 198 residues: Probable nicotinate-nucleotide adenylyltransferase (198 aa).

The protein belongs to the NadD family.

It carries out the reaction nicotinate beta-D-ribonucleotide + ATP + H(+) = deamido-NAD(+) + diphosphate. The protein operates within cofactor biosynthesis; NAD(+) biosynthesis; deamido-NAD(+) from nicotinate D-ribonucleotide: step 1/1. Its function is as follows. Catalyzes the reversible adenylation of nicotinate mononucleotide (NaMN) to nicotinic acid adenine dinucleotide (NaAD). This chain is Probable nicotinate-nucleotide adenylyltransferase, found in Chlorobium limicola (strain DSM 245 / NBRC 103803 / 6330).